We begin with the raw amino-acid sequence, 691 residues long: Elongation factor G (691 aa).

The region spanning Glu8–Ile282 is the tr-type G domain. Residues Ala17–Thr24, Asp81–His85, and Asn135–Asp138 each bind GTP.

Belongs to the TRAFAC class translation factor GTPase superfamily. Classic translation factor GTPase family. EF-G/EF-2 subfamily.

The protein localises to the cytoplasm. Catalyzes the GTP-dependent ribosomal translocation step during translation elongation. During this step, the ribosome changes from the pre-translocational (PRE) to the post-translocational (POST) state as the newly formed A-site-bound peptidyl-tRNA and P-site-bound deacylated tRNA move to the P and E sites, respectively. Catalyzes the coordinated movement of the two tRNA molecules, the mRNA and conformational changes in the ribosome. The sequence is that of Elongation factor G from Prochlorococcus marinus (strain SARG / CCMP1375 / SS120).